Here is a 423-residue protein sequence, read N- to C-terminus: Cyclin-B2-1 (423 aa).

Residues 1 to 61 (MDRASENRRL…EKSGKEEQKP (61 aa)) are disordered. A compositionally biased stretch (basic and acidic residues) spans 49–60 (PMLEKSGKEEQK).

The protein belongs to the cyclin family. Cyclin AB subfamily. In terms of assembly, interacts with CDKB2-1. In terms of tissue distribution, expressed in the intercalary meristem and the elongation zone of internodes. Expressed in adventitious roots at all nodes under submergence conditions.

Involved in the control of the cell cycle at the G2/M (mitosis) transition. May activate CDKB2-1 kinase. This is Cyclin-B2-1 (CYCB2-1) from Oryza sativa subsp. indica (Rice).